Here is a 215-residue protein sequence, read N- to C-terminus: 3-isopropylmalate dehydratase small subunit (215 aa).

The protein belongs to the LeuD family. LeuD type 1 subfamily. In terms of assembly, heterodimer of LeuC and LeuD.

It carries out the reaction (2R,3S)-3-isopropylmalate = (2S)-2-isopropylmalate. Its pathway is amino-acid biosynthesis; L-leucine biosynthesis; L-leucine from 3-methyl-2-oxobutanoate: step 2/4. In terms of biological role, catalyzes the isomerization between 2-isopropylmalate and 3-isopropylmalate, via the formation of 2-isopropylmaleate. This is 3-isopropylmalate dehydratase small subunit from Xanthomonas oryzae pv. oryzae (strain MAFF 311018).